The primary structure comprises 95 residues: Large ribosomal subunit protein bL25 (95 aa).

It belongs to the bacterial ribosomal protein bL25 family. As to quaternary structure, part of the 50S ribosomal subunit; part of the 5S rRNA/L5/L18/L25 subcomplex. Contacts the 5S rRNA. Binds to the 5S rRNA independently of L5 and L18.

Its function is as follows. This is one of the proteins that binds to the 5S RNA in the ribosome where it forms part of the central protuberance. The polypeptide is Large ribosomal subunit protein bL25 (Tolumonas auensis (strain DSM 9187 / NBRC 110442 / TA 4)).